The chain runs to 616 residues: Probable Xaa-Pro aminopeptidase P (616 aa).

4 residues coordinate Mn(2+): Asp-413, Asp-424, Glu-522, and Glu-536.

The protein belongs to the peptidase M24B family. Mn(2+) serves as cofactor.

The catalysed reaction is Release of any N-terminal amino acid, including proline, that is linked to proline, even from a dipeptide or tripeptide.. In terms of biological role, catalyzes the removal of a penultimate prolyl residue from the N-termini of peptides. The polypeptide is Probable Xaa-Pro aminopeptidase P (AMPP) (Paracoccidioides brasiliensis (strain Pb03)).